The primary structure comprises 369 residues: Peptide chain release factor 2 (369 aa).

At Gln251 the chain carries N5-methylglutamine.

It belongs to the prokaryotic/mitochondrial release factor family. Methylated by PrmC. Methylation increases the termination efficiency of RF2.

The protein resides in the cytoplasm. Functionally, peptide chain release factor 2 directs the termination of translation in response to the peptide chain termination codons UGA and UAA. The polypeptide is Peptide chain release factor 2 (Campylobacter fetus subsp. fetus (strain 82-40)).